Reading from the N-terminus, the 238-residue chain is Endonuclease III homolog (238 aa).

Residues 129–155 enclose the HhH domain; that stretch reads REKGLPREMKDLISLPGIGNKMALLYM. K149 (nucleophile; for N-glycosylase activity) is an active-site residue. Positions 217, 224, 227, and 233 each coordinate [4Fe-4S] cluster.

Belongs to the Nth/MutY family. Requires [4Fe-4S] cluster as cofactor.

It localises to the nucleus. Its subcellular location is the mitochondrion. The enzyme catalyses 2'-deoxyribonucleotide-(2'-deoxyribose 5'-phosphate)-2'-deoxyribonucleotide-DNA = a 3'-end 2'-deoxyribonucleotide-(2,3-dehydro-2,3-deoxyribose 5'-phosphate)-DNA + a 5'-end 5'-phospho-2'-deoxyribonucleoside-DNA + H(+). In terms of biological role, bifunctional DNA N-glycosylase with associated apurinic/apyrimidinic (AP) lyase function that catalyzes the first step in base excision repair (BER), the primary repair pathway for the repair of oxidative DNA damage. The DNA N-glycosylase activity releases the damaged DNA base from DNA by cleaving the N-glycosidic bond, leaving an AP site. The AP lyase activity cleaves the phosphodiester bond 3' to the AP site by a beta-elimination. Primarily recognizes and repairs oxidative base damage of pyrimidines. This is Endonuclease III homolog from Encephalitozoon cuniculi (strain GB-M1) (Microsporidian parasite).